The primary structure comprises 682 residues: Potassium-transporting ATPase ATP-binding subunit (682 aa).

The next 4 membrane-spanning stretches (helical) occupy residues 34–54 (PVMF…LAMV), 58–78 (IAGS…TVLF), 219–239 (IALT…TATL), and 254–274 (VLVA…LSAI). Catalysis depends on D307, which acts as the 4-aspartylphosphate intermediate. ATP contacts are provided by residues D344, E348, 377 to 384 (FTAQSRMS), and K395. Mg(2+) contacts are provided by D518 and D522. A run of 3 helical transmembrane segments spans residues 588–608 (FAII…LNVM), 616–636 (AILS…PLAL), and 662–682 (LVVP…LGLA).

The protein belongs to the cation transport ATPase (P-type) (TC 3.A.3) family. Type IA subfamily. As to quaternary structure, the system is composed of three essential subunits: KdpA, KdpB and KdpC.

Its subcellular location is the cell inner membrane. The enzyme catalyses K(+)(out) + ATP + H2O = K(+)(in) + ADP + phosphate + H(+). In terms of biological role, part of the high-affinity ATP-driven potassium transport (or Kdp) system, which catalyzes the hydrolysis of ATP coupled with the electrogenic transport of potassium into the cytoplasm. This subunit is responsible for energy coupling to the transport system and for the release of the potassium ions to the cytoplasm. This is Potassium-transporting ATPase ATP-binding subunit from Salmonella typhimurium (strain LT2 / SGSC1412 / ATCC 700720).